We begin with the raw amino-acid sequence, 568 residues long: Acyl-CoA ligase gloD (568 aa).

Residues 211–219 (TSGTSGFLK), 352–357 (PGYGLT), D436, R455, and K553 contribute to the ATP site. The SBD1 stretch occupies residues 282 to 352 (DMQIALKSVQ…QLCPEWEINP (71 aa)). An SBD2 region spans residues 353 to 415 (GYGLTESFVC…VRSPSVMKEY (63 aa)).

The protein belongs to the ATP-dependent AMP-binding enzyme family.

Its pathway is mycotoxin biosynthesis. In terms of biological role, acyl-CoA ligase; part of the gene cluster that mediates the biosynthesis of pneumocandins, lipohexapeptides of the echinocandin family that prevent fungal cell wall formation by non-competitive inhibition of beta-1,3-glucan synthase. The 10,12-dimethylmyristoyl side chain is synthesized by the reducing polyketide synthase gloL/GLPKS4. The thioesterase gloN/GLHYD exclusively interacts with gloL/GLPKS4 to maintain turnover of the polyketide side chain. The 10R,12S-dimethylmyristic acid is then transferred to the first thiolation domain of the nonribosomal peptide synthetase gloA/GLNRPS4 by the acyl-AMP ligase gloD/GLligase, followed by its acylation to L-ornithine to trigger elongation of the cyclic hexapeptide. L-ornithine, 4R-hydroxyl-L-proline (generated from L-proline by the dioxygenase gloF/GLOXY2), 3S-hydroxyl-L-homotyrosine (generated by gloG/GLHtyB, gloH/GLHtyA, gloI/GLHtyC, gloJ/GLHtyD and hydroxylated at C-3 by the dioxygenase gloM/GLOXY1), 3R-hydroxyl-L-glutamine (generated from L-glutamine probably by the dioxygenase gloE/GLOXY3) and 3S-hydroxyl-L-proline (generated from L-proline by the dioxygenase gloF/GLOXY2 to yield pneumocandin B0), or 3S-hydroxyl-4S-methyl-L-proline (generated from L-leucine by the dioxygenase gloC/GLOXY4 to yield pneumocandin A0) are sequentially added to the growing chain. The last C domain of gloA/GLNRPS4 is proposed to be responsible for cyclization by condensation to form the peptide bond between L-ornithine and 3S-hydroxyl-4S-methyl-L-proline (for pneumocandin A0) or 3S-hydroxyl-L-proline (for pneumocandin B0). Finally, the subsequent C-4 hydroxylation of 3S-hydroxyl-L-homotyrosine and L-ornithine dihydroxylation at C-4 and C-5 are performed by the cytochrome P450 monooxygenases gloP/GLP450-1 and gloO/GLP450-2, respectively. The chain is Acyl-CoA ligase gloD from Glarea lozoyensis (strain ATCC 20868 / MF5171).